The chain runs to 303 residues: Glycine--tRNA ligase alpha subunit (303 aa).

Belongs to the class-II aminoacyl-tRNA synthetase family. Tetramer of two alpha and two beta subunits.

It localises to the cytoplasm. The catalysed reaction is tRNA(Gly) + glycine + ATP = glycyl-tRNA(Gly) + AMP + diphosphate. The protein is Glycine--tRNA ligase alpha subunit of Salmonella agona (strain SL483).